Reading from the N-terminus, the 683-residue chain is Transforming growth factor-beta-induced protein ig-h3 (683 aa).

The signal sequence occupies residues 1–23 (MALLGRLLPLALALALGPAATPA). Serine 37 is subject to Phosphoserine. The EMI domain occupies 45–99 (GPNVCAVQKLIGTNKKYFTNCKQWYQRKICGKSTVISYECCPGYEKVPGEKGCPA). Intrachain disulfides connect cysteine 49-cysteine 85, cysteine 74-cysteine 339, cysteine 84-cysteine 97, cysteine 214-cysteine 317, and cysteine 473-cysteine 478. An S-cysteinyl cysteine modification is found at cysteine 65. FAS1 domains follow at residues 103 to 236 (LSNL…DKVI), 240 to 371 (TNNI…DELL), 375 to 498 (SAKT…DRML), and 502 to 632 (MGTV…SSVL). The Cell attachment site motif lies at 642 to 644 (RGD).

As to quaternary structure, binds to type I, II, and IV collagens. Gamma-carboxylation is controversial. Gamma-carboxyglutamated; gamma-carboxyglutamate residues are formed by vitamin K dependent carboxylation; this may be required for calcium binding. According to a more recent report, does not contain vitamin K-dependent gamma-carboxyglutamate residues. In terms of processing, the EMI domain contains 2 expected intradomain disulfide bridges (Cys-49-Cys85 and Cys-84-Cys-97) and one unusual interdomain disulfide bridge to the second FAS1 domain (Cys-74-Cys-339). This arrangement violates the predicted disulfide bridge pattern of an EMI domain.

The protein localises to the secreted. The protein resides in the extracellular space. It is found in the extracellular matrix. Plays a role in cell adhesion. May play a role in cell-collagen interactions. The chain is Transforming growth factor-beta-induced protein ig-h3 (TGFBI) from Bos taurus (Bovine).